Here is a 138-residue protein sequence, read N- to C-terminus: Superoxide dismutase [Mn] (138 aa).

Mn(2+) is bound by residues histidine 1, histidine 49, aspartate 133, and histidine 137.

It belongs to the iron/manganese superoxide dismutase family. The cofactor is Mn(2+).

It carries out the reaction 2 superoxide + 2 H(+) = H2O2 + O2. Its function is as follows. Destroys superoxide anion radicals which are normally produced within the cells and which are toxic to biological systems. In Mycobacterium celatum, this protein is Superoxide dismutase [Mn] (sodA).